The sequence spans 758 residues: 5-methyltetrahydropteroyltriglutamate--homocysteine methyltransferase (758 aa).

Residues 17–20 and Lys117 contribute to the 5-methyltetrahydropteroyltri-L-glutamate site; that span reads RELK. Residues 434 to 436 and Glu487 contribute to the L-homocysteine site; that span reads IGS. Residues 434–436 and Glu487 contribute to the L-methionine site; that span reads IGS. 5-methyltetrahydropteroyltri-L-glutamate is bound by residues 518–519 and Trp564; that span reads RC. Asp602 lines the L-homocysteine pocket. Asp602 contacts L-methionine. Position 608 (Glu608) interacts with 5-methyltetrahydropteroyltri-L-glutamate. Residues His644, Cys646, and Glu668 each coordinate Zn(2+). The active-site Proton donor is the His697. Cys729 lines the Zn(2+) pocket.

The protein belongs to the vitamin-B12 independent methionine synthase family. It depends on Zn(2+) as a cofactor.

The catalysed reaction is 5-methyltetrahydropteroyltri-L-glutamate + L-homocysteine = tetrahydropteroyltri-L-glutamate + L-methionine. Its pathway is amino-acid biosynthesis; L-methionine biosynthesis via de novo pathway; L-methionine from L-homocysteine (MetE route): step 1/1. In terms of biological role, catalyzes the transfer of a methyl group from 5-methyltetrahydrofolate to homocysteine resulting in methionine formation. The protein is 5-methyltetrahydropteroyltriglutamate--homocysteine methyltransferase of Yersinia pestis (strain Pestoides F).